Here is a 216-residue protein sequence, read N- to C-terminus: MGQKVNPNGFRYGITKPINSVWFAEKQNYGDLLVQDAKIYKFFDKLVRKYQIGNTSIKRTKAQKVTVVLQTSQPAKLLGENGANIEKITQDLHKYLKNKSLDINLQVSLLKQPELNARLAAEAIAQKLENRESFRVAQKLVINDALRAGAKGIKTQVSGRLNGVDMARAEGYSSGEMRLHTLRQDVDFAKATARTIYGAIGVKVWISKGELLEGDK.

Residues 39 to 111 enclose the KH type-2 domain; the sequence is IYKFFDKLVR…DINLQVSLLK (73 aa).

This sequence belongs to the universal ribosomal protein uS3 family. Part of the 30S ribosomal subunit. Forms a tight complex with proteins S10 and S14.

Functionally, binds the lower part of the 30S subunit head. Binds mRNA in the 70S ribosome, positioning it for translation. In Mycoplasmopsis agalactiae (strain NCTC 10123 / CIP 59.7 / PG2) (Mycoplasma agalactiae), this protein is Small ribosomal subunit protein uS3.